A 418-amino-acid polypeptide reads, in one-letter code: Equilibrative nucleotide transporter 3 (418 aa).

A run of 11 helical transmembrane segments spans residues 20 to 40 (MVVC…MLTI), 56 to 76 (VLTL…AYHE), 86 to 106 (LIGY…DLAT), 112 to 132 (IGPY…DATV), 142 to 162 (LMCP…GALT), 186 to 206 (MFLA…AYVF), 264 to 284 (YAVN…GFLY), 291 to 311 (GLGD…DLVG), 326 to 346 (KLIT…YFTA), 353 to 373 (WMIM…VCIM), and 392 to 412 (LVIF…LWLI).

Belongs to the SLC29A/ENT transporter (TC 2.A.57) family. As to expression, expressed in root tips, vasculature of roots and leaves, and meristems of leaf primordia. Expressed in flowers and siliques.

Its subcellular location is the cell membrane. Its function is as follows. Nucleoside transporter that functions as a pyrimidine nucleoside carrier in all organs. Has high affinity for adenosine and uridine when expressed in a heterologous system (yeast). Mediates proton-dependent adenosine or uridine transport in Xenopus oocytes. This chain is Equilibrative nucleotide transporter 3, found in Arabidopsis thaliana (Mouse-ear cress).